The primary structure comprises 251 residues: Transcription factor bHLH144 (251 aa).

Disordered stretches follow at residues 1-20 (MQNN…NMHN), 130-161 (YEEN…YGNT), and 173-202 (NNNN…RKKM). The span at 9–18 (FSDEVGDRNM) shows a compositional bias: basic and acidic residues. Acidic residues predominate over residues 130-147 (YEENDDNEGEEDGGDSEE). Residues 148 to 161 (VSTARTSSRDYGNT) are compositionally biased toward polar residues. Positions 173–192 (NNNNNNNSRKQSLSGSASSS) are enriched in low complexity. In terms of domain architecture, bHLH spans 186-235 (SGSASSSNNDGKGRKKMKKMMGVLRRIVPGGEQMNTACVLDEAVQYLKSL).

As to quaternary structure, homodimer. Interacts with LHW.

It localises to the nucleus. The chain is Transcription factor bHLH144 (BHLH144) from Arabidopsis thaliana (Mouse-ear cress).